The primary structure comprises 385 residues: Effector protein hopAB3 (385 aa).

Disordered stretches follow at residues 1 to 61, 73 to 139, and 215 to 293; these read MVGI…AGRP, TREW…SPLY, and ADSQ…PRIN. The segment at 1–333 is host recognition; sequence MVGISGRAGP…INMEDLRAAL (333 aa). Positions 217 to 234 are enriched in low complexity; it reads SQQAARAPARTPPRSSVR. 2 stretches are compositionally biased toward polar residues: residues 245-256 and 265-283; these read ATESSSGSNQRS and MTSNQRRPSSASNASTSQR.

The protein belongs to the HopAB family. As to quaternary structure, interacts physically with plant cell Pto.

It localises to the secreted. Effector protein involved in gene-for-gene resistance in tomato plants. It is recognized by the host Pto resistance protein and elicits Pto and Prf-dependent hypersensitive response (HR) and programmed cell death (PCD), resulting in host immunity. In susceptible plants, promotes virulence, in part, by enhancing the development of disease symptoms and bacterial growth. The protein is Effector protein hopAB3 (hopAB3) of Pseudomonas syringae pv. maculicola.